We begin with the raw amino-acid sequence, 282 residues long: Bifunctional protein FolD 1 (282 aa).

NADP(+) contacts are provided by residues 167-169 (GRS) and S192.

Belongs to the tetrahydrofolate dehydrogenase/cyclohydrolase family. In terms of assembly, homodimer.

The catalysed reaction is (6R)-5,10-methylene-5,6,7,8-tetrahydrofolate + NADP(+) = (6R)-5,10-methenyltetrahydrofolate + NADPH. The enzyme catalyses (6R)-5,10-methenyltetrahydrofolate + H2O = (6R)-10-formyltetrahydrofolate + H(+). The protein operates within one-carbon metabolism; tetrahydrofolate interconversion. Its function is as follows. Catalyzes the oxidation of 5,10-methylenetetrahydrofolate to 5,10-methenyltetrahydrofolate and then the hydrolysis of 5,10-methenyltetrahydrofolate to 10-formyltetrahydrofolate. This is Bifunctional protein FolD 1 from Colwellia psychrerythraea (strain 34H / ATCC BAA-681) (Vibrio psychroerythus).